Consider the following 379-residue polypeptide: UDP-N-acetylglucosamine--N-acetylmuramyl-(pentapeptide) pyrophosphoryl-undecaprenol N-acetylglucosamine transferase (379 aa).

Residues 17–19 (TGG), Asn-128, Arg-169, Ser-197, and Gln-298 each bind UDP-N-acetyl-alpha-D-glucosamine.

Belongs to the glycosyltransferase 28 family. MurG subfamily.

It localises to the cell inner membrane. The enzyme catalyses di-trans,octa-cis-undecaprenyl diphospho-N-acetyl-alpha-D-muramoyl-L-alanyl-D-glutamyl-meso-2,6-diaminopimeloyl-D-alanyl-D-alanine + UDP-N-acetyl-alpha-D-glucosamine = di-trans,octa-cis-undecaprenyl diphospho-[N-acetyl-alpha-D-glucosaminyl-(1-&gt;4)]-N-acetyl-alpha-D-muramoyl-L-alanyl-D-glutamyl-meso-2,6-diaminopimeloyl-D-alanyl-D-alanine + UDP + H(+). It participates in cell wall biogenesis; peptidoglycan biosynthesis. Functionally, cell wall formation. Catalyzes the transfer of a GlcNAc subunit on undecaprenyl-pyrophosphoryl-MurNAc-pentapeptide (lipid intermediate I) to form undecaprenyl-pyrophosphoryl-MurNAc-(pentapeptide)GlcNAc (lipid intermediate II). The polypeptide is UDP-N-acetylglucosamine--N-acetylmuramyl-(pentapeptide) pyrophosphoryl-undecaprenol N-acetylglucosamine transferase (Brucella suis (strain ATCC 23445 / NCTC 10510)).